A 120-amino-acid chain; its full sequence is Large ribosomal subunit protein uL18 (120 aa).

The interval 1–22 (MITKTSKNAARQKRHARVRAKL) is disordered. Over residues 10-20 (ARQKRHARVRA) the composition is skewed to basic residues.

It belongs to the universal ribosomal protein uL18 family. Part of the 50S ribosomal subunit; part of the 5S rRNA/L5/L18/L25 subcomplex. Contacts the 5S and 23S rRNAs.

Functionally, this is one of the proteins that bind and probably mediate the attachment of the 5S RNA into the large ribosomal subunit, where it forms part of the central protuberance. This Bacillus velezensis (strain DSM 23117 / BGSC 10A6 / LMG 26770 / FZB42) (Bacillus amyloliquefaciens subsp. plantarum) protein is Large ribosomal subunit protein uL18.